Here is a 581-residue protein sequence, read N- to C-terminus: Arginine--tRNA ligase (581 aa).

The short motif at 122-132 is the 'HIGH' region element; that stretch reads PNVAKPMHVGH.

Belongs to the class-I aminoacyl-tRNA synthetase family. Monomer.

It is found in the cytoplasm. The catalysed reaction is tRNA(Arg) + L-arginine + ATP = L-arginyl-tRNA(Arg) + AMP + diphosphate. In Francisella tularensis subsp. holarctica (strain FTNF002-00 / FTA), this protein is Arginine--tRNA ligase.